A 232-amino-acid chain; its full sequence is Large ribosomal subunit protein uL1 (232 aa).

Belongs to the universal ribosomal protein uL1 family. As to quaternary structure, part of the 50S ribosomal subunit.

In terms of biological role, binds directly to 23S rRNA. The L1 stalk is quite mobile in the ribosome, and is involved in E site tRNA release. Its function is as follows. Protein L1 is also a translational repressor protein, it controls the translation of the L11 operon by binding to its mRNA. The polypeptide is Large ribosomal subunit protein uL1 (Francisella tularensis subsp. holarctica (strain LVS)).